Reading from the N-terminus, the 901-residue chain is HTH-type transcriptional regulator MalT (901 aa).

39–46 (SPAGYGKT) lines the ATP pocket. An HTH luxR-type domain is found at 829-894 (ELIRTSPLTQ…DAVQHAQQLL (66 aa)). The segment at residues 853–872 (NEQIAGELAVAATTIKTHIR) is a DNA-binding region (H-T-H motif).

The protein belongs to the MalT family. Monomer in solution. Oligomerizes to an active state in the presence of the positive effectors ATP and maltotriose.

Its activity is regulated as follows. Activated by ATP and maltotriose, which are both required for DNA binding. Positively regulates the transcription of the maltose regulon whose gene products are responsible for uptake and catabolism of malto-oligosaccharides. Specifically binds to the promoter region of its target genes, recognizing a short DNA motif called the MalT box. The polypeptide is HTH-type transcriptional regulator MalT (Salmonella typhimurium (strain LT2 / SGSC1412 / ATCC 700720)).